The following is a 322-amino-acid chain: Arginase-1 (322 aa).

Positions 1 to 27 are disordered; sequence MSFKSQSIGIIGAPFSKGQPRGGVEEG. Residue Ser-7 is modified to Phosphoserine. Lys-17 carries the N6-succinyllysine modification. Position 72 is a phosphoserine (Ser-72). Lys-75 carries the post-translational modification N6-succinyllysine. Positions 101, 124, 126, and 128 each coordinate Mn(2+). Substrate is bound by residues 126 to 130 and 137 to 139; these read HTDIN and TGN. Ser-163 is subject to Phosphoserine. Asp-183 contributes to the substrate binding site. Residue Ser-217 is modified to Phosphoserine. Mn(2+)-binding residues include Asp-232 and Asp-234. The substrate site is built by Thr-246 and Glu-277.

It belongs to the arginase family. In terms of assembly, homotrimer. Interacts with CMTM6. The cofactor is Mn(2+).

It localises to the cytoplasm. It catalyses the reaction L-arginine + H2O = urea + L-ornithine. It functions in the pathway nitrogen metabolism; urea cycle; L-ornithine and urea from L-arginine: step 1/1. The protein is Arginase-1 (ARG1) of Sus scrofa (Pig).